A 143-amino-acid polypeptide reads, in one-letter code: Putative mediator of RNA polymerase II transcription subunit 11 (143 aa).

The stretch at 97-143 (ILSHLEDLNNIVENNQEKQEKEKQEKEKLEKEKLEKEKQQSNEMNID) forms a coiled coil. Residues 109-143 (ENNQEKQEKEKQEKEKLEKEKLEKEKQQSNEMNID) form a disordered region. A compositionally biased stretch (basic and acidic residues) spans 111 to 136 (NQEKQEKEKQEKEKLEKEKLEKEKQQ).

The protein belongs to the Mediator complex subunit 11 family. In terms of assembly, component of the Mediator complex.

The protein resides in the nucleus. In terms of biological role, component of the Mediator complex, a coactivator involved in the regulated transcription of nearly all RNA polymerase II-dependent genes. Mediator functions as a bridge to convey information from gene-specific regulatory proteins to the basal RNA polymerase II transcription machinery. Mediator is recruited to promoters by direct interactions with regulatory proteins and serves as a scaffold for the assembly of a functional pre-initiation complex with RNA polymerase II and the general transcription factors. This is Putative mediator of RNA polymerase II transcription subunit 11 (med11) from Dictyostelium discoideum (Social amoeba).